Reading from the N-terminus, the 398-residue chain is Abhydrolase domain-containing protein 2 (398 aa).

At 1–4 (MSTA) the chain is on the cytoplasmic side. A helical; Signal-anchor for type II membrane protein membrane pass occupies residues 5–22 (FLTLIAVIVCILFRILNV). The Extracellular segment spans residues 23 to 398 (HSQPLKPSVW…MMHEVGKVAP (376 aa)). The region spanning 113-365 (VAICPGIANS…HGGHLGFYEG (253 aa)) is the AB hydrolase-1 domain. Residues Ser-192, Asp-328, and His-359 each act as charge relay system in the active site.

The protein belongs to the AB hydrolase superfamily. AB hydrolase 4 family.

Its subcellular location is the membrane. The polypeptide is Abhydrolase domain-containing protein 2 (Hydr2) (Drosophila melanogaster (Fruit fly)).